The following is a 605-amino-acid chain: Phosphoenolpyruvate carboxykinase [GTP] (605 aa).

Substrate contacts are provided by residues R79 and 218–220 (YGG). Mn(2+)-binding residues include K227 and H247. S269 lines the substrate pocket. 270 to 275 (ACGKTN) is a GTP binding site. Residue C271 is part of the active site. D294 is a Mn(2+) binding site. Basic and acidic residues predominate over residues 364-381 (LTDWKGRDWTPQSDEKAA). Positions 364–385 (LTDWKGRDWTPQSDEKAAHPNS) are disordered. 384-386 (NSR) is a binding site for substrate. GTP is bound by residues R386, R417, and 513 to 516 (FGEN).

This sequence belongs to the phosphoenolpyruvate carboxykinase [GTP] family. In terms of assembly, monomer. The cofactor is Mn(2+).

It is found in the cytoplasm. The catalysed reaction is oxaloacetate + GTP = phosphoenolpyruvate + GDP + CO2. Its pathway is carbohydrate biosynthesis; gluconeogenesis. Its function is as follows. Catalyzes the conversion of oxaloacetate (OAA) to phosphoenolpyruvate (PEP), the rate-limiting step in the metabolic pathway that produces glucose from lactate and other precursors derived from the citric acid cycle. The polypeptide is Phosphoenolpyruvate carboxykinase [GTP] (Saccharopolyspora erythraea (strain ATCC 11635 / DSM 40517 / JCM 4748 / NBRC 13426 / NCIMB 8594 / NRRL 2338)).